The following is a 383-amino-acid chain: Putative glutamate--cysteine ligase 2-2 (383 aa).

Belongs to the glutamate--cysteine ligase type 2 family. YbdK subfamily.

It catalyses the reaction L-cysteine + L-glutamate + ATP = gamma-L-glutamyl-L-cysteine + ADP + phosphate + H(+). Functionally, ATP-dependent carboxylate-amine ligase which exhibits weak glutamate--cysteine ligase activity. The protein is Putative glutamate--cysteine ligase 2-2 of Legionella pneumophila (strain Lens).